We begin with the raw amino-acid sequence, 780 residues long: LPS-assembly protein LptD (780 aa).

The N-terminal stretch at 1 to 24 is a signal peptide; the sequence is MKKRFPTLLATLIWTALYSQHTLA.

It belongs to the LptD family. Component of the lipopolysaccharide transport and assembly complex. Interacts with LptE and LptA.

Its subcellular location is the cell outer membrane. In terms of biological role, together with LptE, is involved in the assembly of lipopolysaccharide (LPS) at the surface of the outer membrane. The sequence is that of LPS-assembly protein LptD from Yersinia pseudotuberculosis serotype I (strain IP32953).